Consider the following 164-residue polypeptide: Peptide methionine sulfoxide reductase MsrA (164 aa).

Cys-16 is an active-site residue.

This sequence belongs to the MsrA Met sulfoxide reductase family.

The enzyme catalyses L-methionyl-[protein] + [thioredoxin]-disulfide + H2O = L-methionyl-(S)-S-oxide-[protein] + [thioredoxin]-dithiol. The catalysed reaction is [thioredoxin]-disulfide + L-methionine + H2O = L-methionine (S)-S-oxide + [thioredoxin]-dithiol. In terms of biological role, has an important function as a repair enzyme for proteins that have been inactivated by oxidation. Catalyzes the reversible oxidation-reduction of methionine sulfoxide in proteins to methionine. The polypeptide is Peptide methionine sulfoxide reductase MsrA (Clostridium tetani (strain Massachusetts / E88)).